Reading from the N-terminus, the 250-residue chain is MPAKLSVNLNAIAMLRNRRDLPWPSVTGLGRTALQAGASGLTVHPRPDQRHIRFSDLQPIRDLIDDEFPAAEFNMEGFPNEAFLELVERHEPEQVTLVPDDPAQATSDHGWDFRKSHNLLGNVVGRLKKRGFRVSLFADGIPDPEALKLAKETGADRIELYTGPYGGCYDDPEKAERIAIELGRTAEIAIGLGLAVNAGHDLTVANLPLLVEHIPELAEVSIGHGLTADALEYGMAETVRRFRRACGETA.

2 residues coordinate 3-amino-2-oxopropyl phosphate: asparagine 8 and arginine 19. Catalysis depends on histidine 44, which acts as the Proton acceptor. Arginine 46 and histidine 51 together coordinate 1-deoxy-D-xylulose 5-phosphate. The active-site Proton acceptor is glutamate 76. Threonine 106 provides a ligand contact to 1-deoxy-D-xylulose 5-phosphate. Histidine 200 acts as the Proton donor in catalysis. Residues aspartate 201 and glycine 223–histidine 224 each bind 3-amino-2-oxopropyl phosphate.

This sequence belongs to the PNP synthase family. In terms of assembly, homooctamer; tetramer of dimers.

It localises to the cytoplasm. The catalysed reaction is 3-amino-2-oxopropyl phosphate + 1-deoxy-D-xylulose 5-phosphate = pyridoxine 5'-phosphate + phosphate + 2 H2O + H(+). It participates in cofactor biosynthesis; pyridoxine 5'-phosphate biosynthesis; pyridoxine 5'-phosphate from D-erythrose 4-phosphate: step 5/5. Its function is as follows. Catalyzes the complicated ring closure reaction between the two acyclic compounds 1-deoxy-D-xylulose-5-phosphate (DXP) and 3-amino-2-oxopropyl phosphate (1-amino-acetone-3-phosphate or AAP) to form pyridoxine 5'-phosphate (PNP) and inorganic phosphate. This Rhizobium meliloti (strain 1021) (Ensifer meliloti) protein is Pyridoxine 5'-phosphate synthase.